Here is a 347-residue protein sequence, read N- to C-terminus: UDP-rhamnose/UDP-galactose transporter 1 (347 aa).

The next 10 membrane-spanning stretches (helical) occupy residues 11 to 31 (AVSDVGAWAMNVISSVGIIMA), 43 to 63 (FGFATTLTGFHFAFTALVGMV), 80 to 100 (LLWFSIVANISIAAMNFSLML), 103 to 123 (VGFYQISKLSMIPVVCVLEWI), 132 to 152 (EVKASVMVVVIGVGICTVTDV), 159 to 179 (FICACTAVFSTSLQQISIGSL), 195 to 215 (APIQAISLLICGPFVDYLLSG), 223 to 243 (MTYGAIFCILLSCALAVFCNI), 256 to 276 (SFQVLGHMKTVCVLTLGWLLF), and 285 to 305 (IAGMAIAIVGMVIYSWAVDIE).

It belongs to the TPT transporter family. TPT (TC 2.A.7.9) subfamily. In terms of tissue distribution, widely expressed in the whole plant.

It localises to the golgi apparatus membrane. Functionally, nucleotide-sugar transporter that transports UDP-rhamnose or UDP-galactose and UMP in a strict counter-exchange mode. In Arabidopsis thaliana (Mouse-ear cress), this protein is UDP-rhamnose/UDP-galactose transporter 1.